Consider the following 130-residue polypeptide: Small ribosomal subunit protein uS8 (130 aa).

The protein belongs to the universal ribosomal protein uS8 family. As to quaternary structure, part of the 30S ribosomal subunit. Contacts proteins S5 and S12.

In terms of biological role, one of the primary rRNA binding proteins, it binds directly to 16S rRNA central domain where it helps coordinate assembly of the platform of the 30S subunit. This chain is Small ribosomal subunit protein uS8, found in Phytoplasma mali (strain AT).